A 361-amino-acid chain; its full sequence is DNA replication and repair protein RecF (361 aa).

30 to 37 (GANGSGKT) contacts ATP.

This sequence belongs to the RecF family.

The protein localises to the cytoplasm. Its function is as follows. The RecF protein is involved in DNA metabolism; it is required for DNA replication and normal SOS inducibility. RecF binds preferentially to single-stranded, linear DNA. It also seems to bind ATP. The protein is DNA replication and repair protein RecF of Pectobacterium atrosepticum (strain SCRI 1043 / ATCC BAA-672) (Erwinia carotovora subsp. atroseptica).